Reading from the N-terminus, the 184-residue chain is 3-hydroxydecanoyl-[acyl-carrier-protein] dehydratase (184 aa).

Residue histidine 77 is part of the active site.

Belongs to the thioester dehydratase family. FabA subfamily. Homodimer.

It localises to the cytoplasm. It catalyses the reaction a (3R)-hydroxyacyl-[ACP] = a (2E)-enoyl-[ACP] + H2O. The catalysed reaction is (3R)-hydroxydecanoyl-[ACP] = (2E)-decenoyl-[ACP] + H2O. The enzyme catalyses (2E)-decenoyl-[ACP] = (3Z)-decenoyl-[ACP]. It functions in the pathway lipid metabolism; fatty acid biosynthesis. Its function is as follows. Necessary for the introduction of cis unsaturation into fatty acids. Catalyzes the dehydration of (3R)-3-hydroxydecanoyl-ACP to E-(2)-decenoyl-ACP and then its isomerization to Z-(3)-decenoyl-ACP. Can catalyze the dehydratase reaction for beta-hydroxyacyl-ACPs with saturated chain lengths up to 16:0, being most active on intermediate chain length. In Hyphomonas neptunium (strain ATCC 15444), this protein is 3-hydroxydecanoyl-[acyl-carrier-protein] dehydratase.